Reading from the N-terminus, the 276-residue chain is Undecaprenyl-diphosphatase 2 (276 aa).

8 consecutive transmembrane segments (helical) span residues 1 to 21, 44 to 64, 87 to 107, 114 to 134, 150 to 170, 190 to 210, 222 to 242, and 251 to 271; these read MSLW…LFPV, QLLP…LWYF, GHLM…GLLL, VFHD…LLWL, LTFK…IPGF, AAEF…LLEL, DALL…RFLM, and LASF…WFMF.

The protein belongs to the UppP family.

The protein resides in the cell inner membrane. It carries out the reaction di-trans,octa-cis-undecaprenyl diphosphate + H2O = di-trans,octa-cis-undecaprenyl phosphate + phosphate + H(+). Catalyzes the dephosphorylation of undecaprenyl diphosphate (UPP). Confers resistance to bacitracin. The polypeptide is Undecaprenyl-diphosphatase 2 (Burkholderia thailandensis (strain ATCC 700388 / DSM 13276 / CCUG 48851 / CIP 106301 / E264)).